We begin with the raw amino-acid sequence, 1324 residues long: Probable phosphoribosylformylglycinamidine synthase (1324 aa).

Residues 314–325 (GATTGTGGRIRD), 394–396 (SGF), and alanine 681 contribute to the ATP site. The Mg(2+) site is built by aspartate 682, glutamate 721, asparagine 725, and aspartate 894. Serine 896 provides a ligand contact to ATP. Residues 1053-1295 (RVAIIREEGS…LTWQWAESSE (243 aa)) form the Glutamine amidotransferase type-1 domain. The active-site Nucleophile is cysteine 1146. Catalysis depends on residues histidine 1280 and aspartate 1282.

The protein in the N-terminal section; belongs to the FGAMS family.

The protein localises to the cytoplasm. It carries out the reaction N(2)-formyl-N(1)-(5-phospho-beta-D-ribosyl)glycinamide + L-glutamine + ATP + H2O = 2-formamido-N(1)-(5-O-phospho-beta-D-ribosyl)acetamidine + L-glutamate + ADP + phosphate + H(+). The protein operates within purine metabolism; IMP biosynthesis via de novo pathway; 5-amino-1-(5-phospho-D-ribosyl)imidazole from N(2)-formyl-N(1)-(5-phospho-D-ribosyl)glycinamide: step 1/2. Functionally, phosphoribosylformylglycinamidine synthase involved in the purines biosynthetic pathway. Catalyzes the ATP-dependent conversion of formylglycinamide ribonucleotide (FGAR) and glutamine to yield formylglycinamidine ribonucleotide (FGAM) and glutamate. This chain is Probable phosphoribosylformylglycinamidine synthase, found in Caenorhabditis elegans.